Here is a 362-residue protein sequence, read N- to C-terminus: Outer membrane porin F (362 aa).

An N-terminal signal peptide occupies residues 1 to 22 (MMKRNILAVIVPALLVAGTANA).

It belongs to the Gram-negative porin family. Homotrimer. Forms mixed heterotrimers with OmpC; other mixed heterotrimers are also probable.

Its subcellular location is the cell outer membrane. In terms of biological role, forms pores that allow passive diffusion of small molecules across the outer membrane. Its function is as follows. (Microbial infection) Is the major receptor for colicin E5. (Microbial infection) A mixed OmpC-OmpF heterotrimer is the outer membrane receptor for toxin CdiA-EC536. The chain is Outer membrane porin F (ompF) from Escherichia coli O6:K15:H31 (strain 536 / UPEC).